The primary structure comprises 283 residues: Phosphatidylserine decarboxylase proenzyme (283 aa).

Catalysis depends on charge relay system; for autoendoproteolytic cleavage activity residues D90, H143, and S248. The active-site Schiff-base intermediate with substrate; via pyruvic acid; for decarboxylase activity is the S248. Residue S248 is modified to Pyruvic acid (Ser); by autocatalysis.

This sequence belongs to the phosphatidylserine decarboxylase family. PSD-B subfamily. Prokaryotic type I sub-subfamily. As to quaternary structure, heterodimer of a large membrane-associated beta subunit and a small pyruvoyl-containing alpha subunit. The cofactor is pyruvate. Is synthesized initially as an inactive proenzyme. Formation of the active enzyme involves a self-maturation process in which the active site pyruvoyl group is generated from an internal serine residue via an autocatalytic post-translational modification. Two non-identical subunits are generated from the proenzyme in this reaction, and the pyruvate is formed at the N-terminus of the alpha chain, which is derived from the carboxyl end of the proenzyme. The autoendoproteolytic cleavage occurs by a canonical serine protease mechanism, in which the side chain hydroxyl group of the serine supplies its oxygen atom to form the C-terminus of the beta chain, while the remainder of the serine residue undergoes an oxidative deamination to produce ammonia and the pyruvoyl prosthetic group on the alpha chain. During this reaction, the Ser that is part of the protease active site of the proenzyme becomes the pyruvoyl prosthetic group, which constitutes an essential element of the active site of the mature decarboxylase.

The protein resides in the cell membrane. The enzyme catalyses a 1,2-diacyl-sn-glycero-3-phospho-L-serine + H(+) = a 1,2-diacyl-sn-glycero-3-phosphoethanolamine + CO2. It functions in the pathway phospholipid metabolism; phosphatidylethanolamine biosynthesis; phosphatidylethanolamine from CDP-diacylglycerol: step 2/2. Functionally, catalyzes the formation of phosphatidylethanolamine (PtdEtn) from phosphatidylserine (PtdSer). This Francisella tularensis subsp. novicida (strain U112) protein is Phosphatidylserine decarboxylase proenzyme.